Here is a 459-residue protein sequence, read N- to C-terminus: Replication initiator protein (459 aa).

Functionally, essential for pSAM2 replication. The sequence is that of Replication initiator protein (repSA) from Streptomyces ambofaciens.